The sequence spans 124 residues: Putative iron-sulfur cluster insertion protein ErpA (124 aa).

Residues cysteine 52, cysteine 116, and cysteine 118 each contribute to the iron-sulfur cluster site.

The protein belongs to the HesB/IscA family. As to quaternary structure, homodimer. Iron-sulfur cluster is required as a cofactor.

Required for insertion of 4Fe-4S clusters. This is Putative iron-sulfur cluster insertion protein ErpA from Ralstonia nicotianae (strain ATCC BAA-1114 / GMI1000) (Ralstonia solanacearum).